The chain runs to 456 residues: Alcohol acyl transferase 1 allele GSc (456 aa).

Catalysis depends on proton acceptor residues His-165 and Asn-386.

It belongs to the plant acyltransferase family. As to expression, expressed at very low levels in the skin of ripe fruit.

Functionally, involved in the biosynthesis of volatile esters which confer ripe apple fruit flavor. Alcohol acyl transferase that can use a wide range of alcohols as substrate to produce esters. The sequence is that of Alcohol acyl transferase 1 allele GSc from Malus domestica (Apple).